We begin with the raw amino-acid sequence, 803 residues long: Lon protease (803 aa).

A Lon N-terminal domain is found at 9–202; it reads MPVLPLRDVV…YLLGMMESEA (194 aa). 356–363 lines the ATP pocket; sequence GPPGVGKT. In terms of domain architecture, Lon proteolytic spans 592–773; that stretch reads QNRIGEVTGL…DEVLGFALEN (182 aa). Residues serine 679 and lysine 722 contribute to the active site.

Belongs to the peptidase S16 family. In terms of assembly, homohexamer. Organized in a ring with a central cavity.

It localises to the cytoplasm. It catalyses the reaction Hydrolysis of proteins in presence of ATP.. In terms of biological role, ATP-dependent serine protease that mediates the selective degradation of mutant and abnormal proteins as well as certain short-lived regulatory proteins. Required for cellular homeostasis and for survival from DNA damage and developmental changes induced by stress. Degrades polypeptides processively to yield small peptide fragments that are 5 to 10 amino acids long. Binds to DNA in a double-stranded, site-specific manner. This is Lon protease from Haemophilus influenzae (strain ATCC 51907 / DSM 11121 / KW20 / Rd).